We begin with the raw amino-acid sequence, 49 residues long: Sperm protamine P1 (49 aa).

Belongs to the protamine P1 family. Testis.

Its subcellular location is the nucleus. It localises to the chromosome. In terms of biological role, protamines substitute for histones in the chromatin of sperm during the haploid phase of spermatogenesis. They compact sperm DNA into a highly condensed, stable and inactive complex. The protein is Sperm protamine P1 (PRM1) of Rhinopoma hardwickii (Lesser mouse-tailed bat).